The sequence spans 965 residues: Argonaute protein wago-4 (965 aa).

The tract at residues 1–34 is disordered; the sequence is MPALPPVYTPSGAPSSVHAPPAVPPVPVPTQPLR. The segment covering 10-20 has biased composition (low complexity); the sequence is PSGAPSSVHAP. The span at 21-30 shows a compositional bias: pro residues; that stretch reads PAVPPVPVPT. One can recognise a PAZ domain in the interval 318–428; it reads PILDKLKEIT…YPMELLKISS (111 aa). The Piwi domain maps to 594–924; the sequence is TFVFIITDDS…YAKRGRNLWN (331 aa).

The protein belongs to the argonaute family. WAGO subfamily. Interacts with znfx-1; the interaction promotes the transmission of epigenetic information across generations. May interact with mina-1. As to expression, expressed in the hermaphrodite germline and in oocytes. Expressed at a low level in the male germline. Not expressed in the soma of hermaphrodites or males.

Its subcellular location is the cytoplasm. The protein resides in the perinuclear region. The protein localises to the cytoplasmic granule. Argonaute protein which is involved in the endogenous small interfering RNA (endo-siRNA) pathway and is required for RNA-mediated gene silencing (RNAi) in the germline. Interacts with secondary 22G-RNAs, which are RNA-dependent RNA polymerase-derived endo-siRNAs, typically 22 nucleotides in length with a 5'guanosine residue. Also interacts with the mRNA targets of 22G-RNAs. Associates with znfx-1 to mediate small RNA-directed transgenerational epigenetic inheritance of both germline- and soma-expressed genes. The sequence is that of Argonaute protein wago-4 from Caenorhabditis elegans.